The chain runs to 310 residues: Thioredoxin reductase (310 aa).

34 to 41 is an FAD binding site; that stretch reads NGMQPGGQ. A disulfide bond links cysteine 135 and cysteine 138. 281–290 provides a ligand contact to FAD; sequence DVQDKIYRQA.

Belongs to the class-II pyridine nucleotide-disulfide oxidoreductase family. In terms of assembly, homodimer. The cofactor is FAD.

The protein localises to the cytoplasm. It carries out the reaction [thioredoxin]-dithiol + NADP(+) = [thioredoxin]-disulfide + NADPH + H(+). The protein is Thioredoxin reductase (trxB) of Rickettsia typhi (strain ATCC VR-144 / Wilmington).